A 238-amino-acid polypeptide reads, in one-letter code: Ribonuclease PH (238 aa).

Residues arginine 86 and 124–126 each bind phosphate; that span reads GTR.

The protein belongs to the RNase PH family. In terms of assembly, homohexameric ring arranged as a trimer of dimers.

It catalyses the reaction tRNA(n+1) + phosphate = tRNA(n) + a ribonucleoside 5'-diphosphate. Phosphorolytic 3'-5' exoribonuclease that plays an important role in tRNA 3'-end maturation. Removes nucleotide residues following the 3'-CCA terminus of tRNAs; can also add nucleotides to the ends of RNA molecules by using nucleoside diphosphates as substrates, but this may not be physiologically important. Probably plays a role in initiation of 16S rRNA degradation (leading to ribosome degradation) during starvation. In Trichlorobacter lovleyi (strain ATCC BAA-1151 / DSM 17278 / SZ) (Geobacter lovleyi), this protein is Ribonuclease PH.